The following is a 268-amino-acid chain: Type III pantothenate kinase (268 aa).

18 to 25 (DIGNTTTT) is a binding site for ATP. Residues Tyr108 and 115–118 (GADR) each bind substrate. The Proton acceptor role is filled by Asp117. Asp138 is a K(+) binding site. Thr141 contributes to the ATP binding site. A substrate-binding site is contributed by Thr193.

Belongs to the type III pantothenate kinase family. Homodimer. The cofactor is NH4(+). It depends on K(+) as a cofactor.

It is found in the cytoplasm. The catalysed reaction is (R)-pantothenate + ATP = (R)-4'-phosphopantothenate + ADP + H(+). It participates in cofactor biosynthesis; coenzyme A biosynthesis; CoA from (R)-pantothenate: step 1/5. In terms of biological role, catalyzes the phosphorylation of pantothenate (Pan), the first step in CoA biosynthesis. In Chlorobaculum parvum (strain DSM 263 / NCIMB 8327) (Chlorobium vibrioforme subsp. thiosulfatophilum), this protein is Type III pantothenate kinase.